A 444-amino-acid chain; its full sequence is CBL-interacting serine/threonine-protein kinase 1 (444 aa).

Residues 20–275 form the Protein kinase domain; that stretch reads YELGRTLGEG…VVGIKASEWF (256 aa). ATP contacts are provided by residues 26-34 and Lys49; that span reads LGEGNFGKV. The Proton acceptor role is filled by Asp143. An activation loop region spans residues 161–190; sequence DFGLSALPQHFRDDGLLHTTCGSPNYVAPE. The residue at position 165 (Ser165) is a Phosphoserine. A Phosphothreonine modification is found at Thr179. In terms of domain architecture, NAF spans 313 to 337; it reads DSPTIINAFQLIGMSSFLDLSGFFE. The interval 343 to 372 is PPI; the sequence is ERRIRFTSNSSAKDLLEKIETAVTEMGFSV.

Belongs to the protein kinase superfamily. CAMK Ser/Thr protein kinase family. SNF1 subfamily. As to quaternary structure, interacts with CBL1. Interacts with CBL2. Interacts with CBL3. Interacts with CBL9. Interacts with ECT1 and ECT2. It depends on Mn(2+) as a cofactor. Autophosphorylated. As to expression, ubiquitous.

The catalysed reaction is L-seryl-[protein] + ATP = O-phospho-L-seryl-[protein] + ADP + H(+). The enzyme catalyses L-threonyl-[protein] + ATP = O-phospho-L-threonyl-[protein] + ADP + H(+). CIPK serine-threonine protein kinases interact with CBL proteins. Binding of a CBL protein to the regulatory NAF domain of CIPK protein lead to the activation of the kinase in a calcium-dependent manner. The protein is CBL-interacting serine/threonine-protein kinase 1 (CIPK1) of Arabidopsis thaliana (Mouse-ear cress).